A 217-amino-acid polypeptide reads, in one-letter code: Uracil-DNA glycosylase (217 aa).

Aspartate 62 (proton acceptor) is an active-site residue.

It belongs to the uracil-DNA glycosylase (UDG) superfamily. UNG family.

Its subcellular location is the cytoplasm. It carries out the reaction Hydrolyzes single-stranded DNA or mismatched double-stranded DNA and polynucleotides, releasing free uracil.. In terms of biological role, excises uracil residues from the DNA which can arise as a result of misincorporation of dUMP residues by DNA polymerase or due to deamination of cytosine. The protein is Uracil-DNA glycosylase of Streptococcus pneumoniae (strain JJA).